Consider the following 348-residue polypeptide: Cyclic AMP-dependent transcription factor ATF-4 (348 aa).

Lys-53 participates in a covalent cross-link: Glycyl lysine isopeptide (Lys-Gly) (interchain with G-Cter in SUMO2). Disordered stretches follow at residues 151–174 (QGAP…TPDH) and 187–265 (PEGD…GEKM). 5 positions are modified to phosphoserine: Ser-211, Ser-215, Ser-220, Ser-227, and Ser-231. Residues 211–220 (SDNDSGICMS) carry the BetaTrCP degron motif motif. Over residues 221–241 (PDSSLGSPQDSPSTSRGSPNK) the composition is skewed to polar residues. Residue Pro-232 is modified to 4-hydroxyproline. 2 positions are modified to phosphoserine: Ser-242 and Ser-245. Residues 242 to 253 (SLLSPGALSGSS) are compositionally biased toward low complexity. Glycyl lysine isopeptide (Lys-Gly) (interchain with G-Cter in SUMO2) cross-links involve residues Lys-256, Lys-264, and Lys-269. One can recognise a bZIP domain in the interval 275-338 (LDKKLKKMEQ…QYLKDQIEEV (64 aa)). The tract at residues 277 to 297 (KKLKKMEQNKTAATRYRQKKR) is basic motif. The interval 302–338 (ALTGECKELEKKNEALKEKADSLAKEIQYLKDQIEEV) is interaction with GABBR1. Residues 303–331 (LTGECKELEKKNEALKEKADSLAKEIQYL) form a leucine-zipper region. Lys-308 carries the N6-acetyllysine modification.

This sequence belongs to the bZIP family. In terms of assembly, binds DNA as a homodimer and as a heterodimer. Heterodimer; heterodimerizes with CEBPB. Heterodimer; heterodimerizes with DDIT3/CHOP. Interacts with CEP290 (via an N-terminal region). Interacts with NEK6, DAPK2 (isoform 2) and ZIPK/DAPK3. Interacts (via its leucine zipper domain) with GABBR1 and GABBR2 (via their C-termini). Forms a heterodimer with TXLNG in osteoblasts. Interacts (via its DNA binding domain) with FOXO1 (C-terminal half); the interaction occurs in osteoblasts and regulates glucose homeostasis through suppression of beta-cell proliferation and a decrease in insulin production. Interacts with SATB2; the interaction results in enhanced DNA binding and transactivation by these transcription factors. Interacts with ABRAXAS2. Interacts with TRIB3, inhibiting the transactivation activity of ATF4. Interacts with DISC1; which inhibits ATF4 transcription factor activity by disrupting ATF4 dimerization and DNA-binding. Interacts with EP300/p300; EP300/p300 stabilizes ATF4 and increases its transcriptional activity independently of its catalytic activity by preventing its ubiquitination. In terms of processing, ubiquitinated by SCF(BTRC) in response to mTORC1 signal, followed by proteasomal degradation and leading to down-regulate expression of SIRT4. Interaction with EP300/p300 inhibits ubiquitination by SCF(BTRC). Phosphorylation at Ser-242 by RPS6KA3/RSK2 in osteoblasts enhances transactivation activity and promotes osteoblast differentiation. Phosphorylated on the betaTrCP degron motif at Ser-215, followed by phosphorylation at Ser-220, Ser-227, Ser-231 and Ser-245, promoting interaction with BTRC and ubiquitination. Phosphorylation is promoted by mTORC1. Phosphorylation at Ser-211 by CK2 decreases its stability. Phosphorylated by NEK6. Post-translationally, hydroxylated by PHD3, leading to decreased protein stability.

It is found in the nucleus. Its subcellular location is the nucleus speckle. The protein localises to the cytoplasm. It localises to the cell membrane. The protein resides in the cytoskeleton. It is found in the microtubule organizing center. Its subcellular location is the centrosome. In terms of biological role, transcription factor that binds the cAMP response element (CRE) (consensus: 5'-GTGACGT[AC][AG]-3') and displays two biological functions, as regulator of metabolic and redox processes under normal cellular conditions, and as master transcription factor during integrated stress response (ISR). Binds to asymmetric CRE's as a heterodimer and to palindromic CRE's as a homodimer. Core effector of the ISR, which is required for adaptation to various stress such as endoplasmic reticulum (ER) stress, amino acid starvation, mitochondrial stress or oxidative stress. During ISR, ATF4 translation is induced via an alternative ribosome translation re-initiation mechanism in response to EIF2S1/eIF-2-alpha phosphorylation, and stress-induced ATF4 acts as a master transcription factor of stress-responsive genes in order to promote cell recovery. Promotes the transcription of genes linked to amino acid sufficiency and resistance to oxidative stress to protect cells against metabolic consequences of ER oxidation. Activates the transcription of NLRP1, possibly in concert with other factors in response to ER stress. Activates the transcription of asparagine synthetase (ASNS) in response to amino acid deprivation or ER stress. However, when associated with DDIT3/CHOP, the transcriptional activation of the ASNS gene is inhibited in response to amino acid deprivation. Together with DDIT3/CHOP, mediates programmed cell death by promoting the expression of genes involved in cellular amino acid metabolic processes, mRNA translation and the terminal unfolded protein response (terminal UPR), a cellular response that elicits programmed cell death when ER stress is prolonged and unresolved. Activates the expression of COX7A2L/SCAF1 downstream of the EIF2AK3/PERK-mediated unfolded protein response, thereby promoting formation of respiratory chain supercomplexes and increasing mitochondrial oxidative phosphorylation. Together with DDIT3/CHOP, activates the transcription of the IRS-regulator TRIB3 and promotes ER stress-induced neuronal cell death by regulating the expression of BBC3/PUMA in response to ER stress. May cooperate with the UPR transcriptional regulator QRICH1 to regulate ER protein homeostasis which is critical for cell viability in response to ER stress. In the absence of stress, ATF4 translation is at low levels and it is required for normal metabolic processes such as embryonic lens formation, fetal liver hematopoiesis, bone development and synaptic plasticity. Acts as a regulator of osteoblast differentiation in response to phosphorylation by RPS6KA3/RSK2: phosphorylation in osteoblasts enhances transactivation activity and promotes expression of osteoblast-specific genes and post-transcriptionally regulates the synthesis of Type I collagen, the main constituent of the bone matrix. Cooperates with FOXO1 in osteoblasts to regulate glucose homeostasis through suppression of beta-cell production and decrease in insulin production. Activates transcription of SIRT4. Regulates the circadian expression of the core clock component PER2 and the serotonin transporter SLC6A4. Binds in a circadian time-dependent manner to the cAMP response elements (CRE) in the SLC6A4 and PER2 promoters and periodically activates the transcription of these genes. Mainly acts as a transcriptional activator in cellular stress adaptation, but it can also act as a transcriptional repressor: acts as a regulator of synaptic plasticity by repressing transcription, thereby inhibiting induction and maintenance of long-term memory. Regulates synaptic functions via interaction with DISC1 in neurons, which inhibits ATF4 transcription factor activity by disrupting ATF4 dimerization and DNA-binding. This chain is Cyclic AMP-dependent transcription factor ATF-4, found in Bos taurus (Bovine).